We begin with the raw amino-acid sequence, 260 residues long: Adenosylcobinamide-GDP ribazoletransferase (260 aa).

6 consecutive transmembrane segments (helical) span residues A40–Y60, L64–L84, F117–I137, G192–I212, A214–G234, and T240–L260.

This sequence belongs to the CobS family. Requires Mg(2+) as cofactor.

It localises to the cell inner membrane. It carries out the reaction alpha-ribazole + adenosylcob(III)inamide-GDP = adenosylcob(III)alamin + GMP + H(+). The enzyme catalyses alpha-ribazole 5'-phosphate + adenosylcob(III)inamide-GDP = adenosylcob(III)alamin 5'-phosphate + GMP + H(+). It participates in cofactor biosynthesis; adenosylcobalamin biosynthesis; adenosylcobalamin from cob(II)yrinate a,c-diamide: step 7/7. Its function is as follows. Joins adenosylcobinamide-GDP and alpha-ribazole to generate adenosylcobalamin (Ado-cobalamin). Also synthesizes adenosylcobalamin 5'-phosphate from adenosylcobinamide-GDP and alpha-ribazole 5'-phosphate. The chain is Adenosylcobinamide-GDP ribazoletransferase from Brucella anthropi (strain ATCC 49188 / DSM 6882 / CCUG 24695 / JCM 21032 / LMG 3331 / NBRC 15819 / NCTC 12168 / Alc 37) (Ochrobactrum anthropi).